Reading from the N-terminus, the 355-residue chain is Class E basic helix-loop-helix protein 22 (355 aa).

2 disordered regions span residues 34–90 and 128–215; these read AFRS…GGGG and GRGS…KEQK. Composition is skewed to gly residues over residues 81 to 90 and 185 to 207; these read GGGGASGGGG and GGSGLPPGGPTSGGGSGGGGGGS. The bHLH domain maps to 216-270; that stretch reads ALRLNINARERRRMHDLNDALDELRAVIPYAHSPSVRKLSKIATLLLAKNYILMQ.

In terms of assembly, interacts with PRDM8. In terms of tissue distribution, brain-specific, with the highest expression in the cerebellum.

The protein localises to the nucleus. Inhibits DNA binding of TCF3/E47 homodimers and TCF3 (E47)/NEUROD1 heterodimers and acts as a strong repressor of Neurod1 and Myod-responsive genes, probably by heterodimerization with class a basic helix-loop-helix factors. Despite the presence of an intact basic domain, does not bind to DNA. In the brain, may function as an area-specific transcription factor that regulates the postmitotic acquisition of area identities and elucidate the genetic hierarchy between progenitors and postmitotic neurons driving neocortical arealization. May be required for the survival of a specific population of inhibitory neurons in the superficial laminae of the spinal cord dorsal horn that may regulate pruritis. Seems to play a crucial role in the retinogenesis, in the specification of amacrine and bipolar subtypes. Forms with PRDM8 a transcriptional repressor complex controlling genes involved in neural development and neuronal differentiation. This Mus musculus (Mouse) protein is Class E basic helix-loop-helix protein 22 (Bhlhe22).